The sequence spans 676 residues: Envelope glycoprotein (676 aa).

Positions 1–32 (MGVTGILQLPRDRFKRTSFFLWVIILFQRTFS) are cleaved as a signal peptide. The Extracellular portion of the chain corresponds to 33-650 (IPLGVIHNST…NDNWWTGWRQ (618 aa)). An N-linked (GlcNAc...) asparagine; by host glycan is attached at asparagine 40. 5 disulfides stabilise this stretch: cysteine 53-cysteine 609, cysteine 108-cysteine 135, cysteine 121-cysteine 147, cysteine 511-cysteine 556, and cysteine 601-cysteine 608. The tract at residues 54 to 201 (RDKLSSTNQL…DFFSSHPLRE (148 aa)) is receptor-binding. N-linked (GlcNAc...) asparagine; by host glycosylation is found at asparagine 204, asparagine 228, asparagine 238, asparagine 257, asparagine 268, asparagine 296, asparagine 317, asparagine 333, asparagine 346, asparagine 386, and asparagine 413. The mucin-like region stretch occupies residues 305–485 (ELSFTVVSNG…SGKLGLITNT (181 aa)). Positions 315–335 (AKNISGQSPARTSSDPGTNTT) are enriched in polar residues. The interval 315 to 337 (AKNISGQSPARTSSDPGTNTTTE) is disordered. A compositionally biased stretch (polar residues) spans 373 to 391 (TSPQSLTTKPGPDNSTHNT). Disordered stretches follow at residues 373–392 (TSPQ…HNTP) and 402–479 (TQVE…SGKL). Over residues 414–432 (DSTASDTPSATTAAGPPKA) the composition is skewed to low complexity. The segment covering 433–464 (ENTNTSKSTDFLDPATTTSPQNHSETAGNNNT) has biased composition (polar residues). 3 N-linked (GlcNAc...) asparagine; by host glycosylation sites follow: asparagine 436, asparagine 454, and asparagine 462. The fusion peptide stretch occupies residues 524-539 (GAAIGLAWIPYFGPAA). Positions 554–595 (LICGLRQLANETTQALQLFLRATTELRTFSILNRKAIDFLLQ) form a coiled coil. Asparagine 563 is a glycosylation site (N-linked (GlcNAc...) asparagine; by host). Residues 615–634 (WTKNITDKIDQIIHDFVDKT) adopt a coiled-coil conformation. Asparagine 618 is a glycosylation site (N-linked (GlcNAc...) asparagine; by host). The chain crosses the membrane as a helical span at residues 651–671 (WIPAGIGVTGVIIAVIALFCI). The short motif at 660–664 (GVIIA) is the Important role for host BST2/tetherin antagonism element. 2 S-palmitoyl cysteine; by host lipidation sites follow: cysteine 670 and cysteine 672. Residues 672-676 (CKFVF) are Cytoplasmic-facing.

This sequence belongs to the filoviruses glycoprotein family. In terms of assembly, homotrimer; each monomer consists of a GP1 and a GP2 subunit linked by disulfide bonds. The resulting peplomers (GP1,2) protrude from the virus surface as spikes. Interacts with host integrin alpha-V/ITGAV. Interacts with host CLEC10A. Also binds to host CD209 and CLEC4M/DC-SIGN(R). Interacts with host FOLR1. Interacts with BST2; this interaction inhibits the antiviral effect of BST2 and this allows viral release from infected cells. Interacts with host FCN1; this interaction enhances viral entry. Interacts with host TLR4; this interaction induces cell death in T-lymphocytes or proinflammatory cytokines and SOCS1 production in monocytes. Interacts with host entry receptor NPC1. As to quaternary structure, GP1 and GP2delta are part of GP1,2delta soluble complexes released by ectodomain shedding. The signal peptide region modulates GP's high mannose glycosylation, thereby determining the efficiency of the interactions with DC-SIGN(R). In terms of processing, N-glycosylated. Post-translationally, glycosylated; glycosylation is essential for the activation of dendritic cells and macrophages. O-glycosylated in the mucin-like region. In terms of processing, palmitoylation is not required for its function. Post-translationally, specific enzymatic cleavages in vivo yield mature proteins. The precursor is processed into GP1 and GP2 by host cell furin in the trans Golgi, and maybe by other host proteases, to yield the mature GP1 and GP2 proteins. The cleavage site corresponds to the furin optimal cleavage sequence [KR]-X-[KR]-R. This cleavage does not seem to be required for function. After the internalization of the virus into cell endosomes, GP1 C-terminus is removed by the endosomal proteases cathepsin B, cathepsin L, or both, leaving a 19-kDa N-terminal fragment which is further digested by cathepsin B. This cleaved 19-kDa GP1 can then bind to the host entry receptor NPC1. Proteolytic processing of GP1,2 by host ADAM17 can remove the transmembrane anchor of GP2 and leads to shedding of complexes consisting in GP1 and truncated GP2 (GP1,2delta).

It localises to the virion membrane. It is found in the host cell membrane. Its subcellular location is the secreted. Its function is as follows. Trimeric GP1,2 complexes form the virion surface spikes and mediate the viral entry processes, with GP1 acting as the receptor-binding subunit and GP2 as the membrane fusion subunit. At later times of infection, down-regulates the expression of various host cell surface molecules that are essential for immune surveillance and cell adhesion. Down-modulates several integrins including ITGA1, ITGA2, ITGA3, ITGA4, ITGA5, ITGA6, ITGAV and ITGB1. This decrease in cell adhesion molecules may lead to cell detachment, contributing to the disruption of blood vessel integrity and hemorrhages developed during infection (cytotoxicity). Interacts with host TLR4 and thereby stimulates the differentiation and activation of monocytes leading to bystander death of T-lymphocytes. Down-regulates as well the function of host natural killer cells. Counteracts the antiviral effect of host BST2/tetherin that restricts release of progeny virions from infected cells. However, cooperates with VP40 and host BST2 to activate canonical NF-kappa-B pathway in a manner dependent on neddylation. Functionally, functions as a decoy for anti-GP1,2 antibodies thereby contributing to viral immune evasion. Interacts and activates host macrophages and dendritic cells inducing up-regulation of cytokine transcription. This effect is mediated throught activation of host TLR4. In terms of biological role, responsible for binding to the receptor(s) on target cells. Interacts with CD209/DC-SIGN and CLEC4M/DC-SIGNR which act as cofactors for virus entry into dendritic cells (DCs) and endothelial cells. Binding to the macrophage specific lectin CLEC10A also seems to enhance virus infectivity. Interaction with FOLR1/folate receptor alpha may be a cofactor for virus entry in some cell types, although results are contradictory. Members of the Tyro3 receptor tyrosine kinase family also seem to be cell entry factors in filovirus infection. Once attached, the virions are internalized through clathrin-dependent endocytosis and/or macropinocytosis. After internalization of the virus into the endosomes of the host cell, proteolysis of GP1 by two cysteine proteases, CTSB/cathepsin B and CTSL/cathepsin L removes the glycan cap and allows GP1 binding to the host entry receptor NPC1. NPC1-binding, Ca(2+) and acidic pH induce a conformational change of GP2, which unmasks its fusion peptide and permit membranes fusion. Acts as a class I viral fusion protein. Under the current model, the protein has at least 3 conformational states: pre-fusion native state, pre-hairpin intermediate state, and post-fusion hairpin state. During viral and target cell membrane fusion, the coiled coil regions (heptad repeats) assume a trimer-of-hairpins structure, positioning the fusion peptide in close proximity to the C-terminal region of the ectodomain. The formation of this structure appears to drive apposition and subsequent fusion of viral and target cell membranes. Responsible for penetration of the virus into the cell cytoplasm by mediating the fusion of the membrane of the endocytosed virus particle with the endosomal membrane. Low pH in endosomes induces an irreversible conformational change in GP2, releasing the fusion hydrophobic peptide. This is Envelope glycoprotein (GP) from Epomops franqueti (Franquet's epauletted fruit bat).